The chain runs to 3011 residues: Genome polyprotein (3011 aa).

An N-acetylserine; by host modification is found at serine 2. Positions 2–23 (STIPKPQRKTKRNTNRRPQDVK) are interaction with STAT1. Residues 2-58 (STIPKPQRKTKRNTNRRPQDVKFPGGGQIVGGVYLLPRRGPRLGVRATRKTSERSQP) form an interaction with EIF2AK2/PKR region. The segment at 2–59 (STIPKPQRKTKRNTNRRPQDVKFPGGGQIVGGVYLLPRRGPRLGVRATRKTSERSQPR) is interaction with DDX3X. Residues 2 to 75 (STIPKPQRKT…PKVRRPEGRT (74 aa)) form a disordered region. The Cytoplasmic segment spans residues 2 to 168 (STIPKPQRKT…EDGVNYATGN (167 aa)). 2 consecutive short sequence motifs (nuclear localization signal) follow at residues 5 to 13 (PKPQRKTKR) and 38 to 43 (PRRGPR). The span at 7–16 (PQRKTKRNTN) shows a compositional bias: basic residues. Low complexity predominate over residues 32–47 (GGVYLLPRRGPRLGVR). Residue serine 53 is modified to Phosphoserine; by host. 2 consecutive short sequence motifs (nuclear localization signal) follow at residues 58–64 (PRGRRQP) and 66–71 (PKVRRP). Over residues 58–68 (PRGRRQPIPKV) the composition is skewed to basic residues. A Phosphoserine; by host modification is found at serine 99. The important for endoplasmic reticulum and mitochondrial localization stretch occupies residues 112–152 (PRRRSRNLGKVIDTLTCGFADLMGYIPLVGAPLGGAARALA). Serine 116 bears the Phosphoserine; by host PKA mark. The interval 122–173 (VIDTLTCGFADLMGYIPLVGAPLGGAARALAHGVRVLEDGVNYATGNLPGCS) is interaction with APOA2. An important for lipid droplets localization region spans residues 164–167 (YATG). A helical transmembrane segment spans residues 169–189 (LPGCSFSIFLLALLSCLTVPA). The propeptide at 178–191 (LLALLSCLTVPASA) is ER anchor for the core protein, removed in mature form by host signal peptidase. The Lumenal segment spans residues 190 to 358 (SAYQVRNSTG…AGAHWGVLAG (169 aa)). N-linked (GlcNAc...) asparagine; by host glycans are attached at residues asparagine 196, asparagine 209, and asparagine 234. The segment at 265-296 (LVGSATLCSALYVGDLCGSVFLIGQLFTFSPR) is important for fusion. N-linked (GlcNAc...) asparagine; by host glycosylation is present at asparagine 305. A helical transmembrane segment spans residues 359–379 (IAYFSMVGNWAKVLVVLLLFA). At 380 to 725 (GVDAETIVSG…WEYVVLLFLL (346 aa)) the chain is on the lumenal side. The segment at 385 to 411 (TIVSGGQAARAMSGLVSLFTPGAKQNI) is HVR1. N-linked (GlcNAc...) (high mannose) asparagine; by host glycans are attached at residues asparagine 417, asparagine 423, asparagine 430, and asparagine 448. 4 disulfide bridges follow: cysteine 429–cysteine 552, cysteine 452–cysteine 459, cysteine 486–cysteine 494, and cysteine 503–cysteine 508. Positions 474-479 (HANGSG) are HVR2. A CD81-binding 1 region spans residues 480–493 (PDQRPYCWHYPPKP). Asparagine 532 is a glycosylation site (N-linked (GlcNAc...) (high mannose) asparagine; by host). Asparagine 540 carries an N-linked (GlcNAc...) asparagine; by host glycan. Residues 544-551 (PPLGNWFG) are CD81-binding 2. Asparagine 556 is a glycosylation site (N-linked (GlcNAc...) (high mannose) asparagine; by host). A disulfide bridge links cysteine 564 with cysteine 569. An N-linked (GlcNAc...) (high mannose) asparagine; by host glycan is attached at asparagine 576. 3 disulfides stabilise this stretch: cysteine 581-cysteine 585, cysteine 597-cysteine 620, and cysteine 607-cysteine 644. N-linked (GlcNAc...) (high mannose) asparagine; by host glycosylation is found at asparagine 623 and asparagine 645. A disulfide bridge links cysteine 652 with cysteine 677. Residues 660-671 (SELSPLLLSTTQ) are PKR/eIF2-alpha phosphorylation homology domain (PePHD). A helical membrane pass occupies residues 726–746 (LADARVCSCLWMMLLISQAEA). Over 747-757 (ALENLVILNAA) the chain is Lumenal. The chain crosses the membrane as a helical span at residues 758-778 (SLAGTRGLVSFLVFFCFAWYL). The Cytoplasmic portion of the chain corresponds to 779-781 (KGR). A helical membrane pass occupies residues 782-803 (WVPGAAYALYGMWPLLLLLLAL). Topologically, residues 804–813 (PQRAYALDTE) are lumenal. The chain crosses the membrane as a helical span at residues 814–834 (VAASCGGVVLVGLMALTLSPY). Residues 835–838 (YKRC) lie on the Cytoplasmic side of the membrane. Residues 839-859 (ISWCLWWLQYFLTRVEAQLHV) traverse the membrane as a helical segment. Residues 860-881 (WVPPLNVRGGRDAVILLMCVVH) are Lumenal-facing. The chain crosses the membrane as a helical span at residues 882-902 (PTLVFDITKLLLAVLGPLWIL). In terms of domain architecture, Peptidase C18 spans 903-1026 (QASLLKVPYF…GMVSKGWRLL (124 aa)). The Cytoplasmic portion of the chain corresponds to 903–1657 (QASLLKVPYF…CMSADLEVVT (755 aa)). The segment at 904–1206 (ASLLKVPYFV…PVESLETTMR (303 aa)) is protease NS2-3. A lipid anchor (S-palmitoyl cysteine; by host) is attached at cysteine 922. Residues 929–949 (VGGHYVQMAIIKLGALTGTYV) form an interaction with host SCPS1 region. Catalysis depends on for protease NS2 activity; shared with dimeric partner residues histidine 952, glutamate 972, and cysteine 993. The region spanning 1027 to 1208 (APITAYAQQT…ESLETTMRSP (182 aa)) is the Peptidase S29 domain. Active-site charge relay system; for serine protease NS3 activity residues include histidine 1083 and aspartate 1107. 2 residues coordinate Zn(2+): cysteine 1123 and cysteine 1125. Serine 1165 acts as the Charge relay system; for serine protease NS3 activity in catalysis. Cysteine 1171 and histidine 1175 together coordinate Zn(2+). The Helicase ATP-binding domain occupies 1217–1369 (PAVPQSFQVA…ANIEEVALST (153 aa)). 1230–1237 (APTGSGKS) serves as a coordination point for ATP. Residues serine 1237 and glutamate 1317 each coordinate Mg(2+). The DECH box motif lies at 1316-1319 (DECH). The RNA-binding stretch occupies residues 1486–1497 (QRRGRTGRGKPG). A helical membrane pass occupies residues 1658 to 1678 (STWVLVGGVLAALAAYCLSTG). Residues 1679–1690 (CVVIVGRIVLSG) are NS3-binding. Over 1679–1805 (CVVIVGRIVL…AVTSPLTTSQ (127 aa)) the chain is Cytoplasmic. The helical transmembrane segment at 1806–1824 (TLLFNILGGWVAAQLAAPG) threads the bilayer. Residues 1825-1828 (AATA) lie on the Lumenal side of the membrane. A helical transmembrane segment spans residues 1829–1849 (FVGSGLAGAAVGSVGLGRVLV). Position 1850 (aspartate 1850) is a topological domain, cytoplasmic. Residues 1851–1871 (ILAGYGAGVAGALVAFKIMSG) traverse the membrane as a helical segment. Residues 1872–1881 (ELPSTEDLVN) lie on the Lumenal side of the membrane. Residues 1882 to 1902 (LLPAILSPGALVVGVVCAAIL) traverse the membrane as a helical segment. Topologically, residues 1903-1972 (RRHVGPGEGA…WLSSESTTPC (70 aa)) are cytoplasmic. Cysteine 1972 carries the S-palmitoyl cysteine; by host lipid modification. An intramembrane segment occupies 1973–2002 (SGSWLRDIWDWICEVLSDFKTWLKTKLMPH). The Cytoplasmic portion of the chain corresponds to 2003–2990 (LPGIPFVSCQ…YHSVSHARPR (988 aa)). Zn(2+)-binding residues include cysteine 2011, cysteine 2029, cysteine 2031, and cysteine 2052. Positions 2120-2208 (EFFTELDGVR…ASSSASQLSA (89 aa)) are FKBP8-binding. A transcriptional activation region spans residues 2120–2332 (EFFTELDGVR…PVPPPRKKRT (213 aa)). The tract at residues 2135–2139 (PPCKP) is interaction with non-structural protein 4A. The tract at residues 2187-2207 (GRRLARGSPPSEASSSASQLS) is disordered. Residues 2189–2441 (RLARGSPPSE…TPCAAEEQKL (253 aa)) form an interaction with host SKP2 region. Serine 2194 bears the Phosphoserine; by host; in p56 mark. Phosphoserine; by host; in p58 is present on residues serine 2197, serine 2201, serine 2204, serine 2207, and serine 2210. The tract at residues 2210–2249 (SLKATCTINHDSPDAELIEANLLWRQEMGGNITRVESENK) is ISDR. The segment at 2210-2275 (SLKATCTINH…REISVPAEIL (66 aa)) is interaction with EIF2AK2/PKR. The tract at residues 2249-2306 (KVVILDSFDPLVAEEDEREISVPAEILRKSRRFTQALPIWARPDYNPPLIETWKKPNY) is NS4B-binding. The disordered stretch occupies residues 2312 to 2334 (HGCPLPPPQSPPVPPPRKKRTVV). A compositionally biased stretch (pro residues) spans 2315 to 2326 (PLPPPQSPPVPP). The short motif at 2322–2325 (PPVP) is the SH3-binding element. Residues 2326–2334 (PPRKKRTVV) carry the Nuclear localization signal motif. Lysine 2350 is covalently cross-linked (Glycyl lysine isopeptide (Lys-Gly) (interchain with G-Cter in ubiquitin)). Residues 2351 to 2369 (SFGSSSTSGITGDNTTTSS) are compositionally biased toward low complexity. The disordered stretch occupies residues 2351-2408 (SFGSSSTSGITGDNTTTSSEPAPSGCSPDSDAESYSSMPPLEGEPGDPDLSDGSWSTV). The V3 stretch occupies residues 2354–2377 (SSSTSGITGDNTTTSSEPAPSGCS). Phosphoserine; by host occurs at positions 2449 and 2462. Residues 2634 to 2752 (PMGFSYDTRC…ICESAGVQED (119 aa)) form the RdRp catalytic domain. Residues aspartate 2640, aspartate 2738, and aspartate 2739 each contribute to the Mg(2+) site. The chain crosses the membrane as a helical span at residues 2991 to 3011 (WFWFCLLLLAAGVGIYLLPNR).

The protein belongs to the hepacivirus polyprotein family. Homooligomer. Interacts with E1 (via C-terminus). Interacts with the non-structural protein 5A. Interacts (via N-terminus) with host STAT1 (via SH2 domain); this interaction results in decreased STAT1 phosphorylation and ubiquitin-mediated proteasome-dependent STAT1 degradation, leading to decreased IFN-stimulated gene transcription. Interacts with host STAT3; this interaction constitutively activates STAT3. Interacts with host LTBR receptor. Interacts with host TNFRSF1A receptor and possibly induces apoptosis. Interacts with host HNRPK. Interacts with host YWHAE. Interacts with host UBE3A/E6AP. Interacts with host DDX3X. Interacts with host APOA2. Interacts with host RXRA protein. Interacts with host SP110 isoform 3/Sp110b; this interaction sequesters the transcriptional corepressor SP110 away from the nucleus. Interacts with host CREB3 nuclear transcription protein; this interaction triggers cell transformation. Interacts with host ACY3. Interacts with host C1QR1. Interacts with host RBM24; this interaction, which enhances the interaction of the mature core protein with 5'-UTR, may inhibit viral translation and favor replication. Interacts with host EIF2AK2/PKR; this interaction induces the autophosphorylation of EIF2AK2. Part of the viral assembly initiation complex composed of NS2, E1, E2, NS3, NS4A, NS5A and the mature core protein. In terms of assembly, forms a heterodimer with envelope glycoprotein E2. Interacts with mature core protein. Interacts with protease NS2. The heterodimer E1/E2 interacts with host CLDN1; this interaction plays a role in viral entry into host cell. Interacts with host SPSB2 (via C-terminus). Part of the viral assembly initiation complex composed of NS2, E1, E2, NS3, NS4A, NS5A and the mature core protein. Interacts with host NEURL3; this interaction prevents E1 binding to glycoprotein E2. As to quaternary structure, forms a heterodimer with envelope glycoprotein E1. Interacts with host CD81 and SCARB1 receptors; these interactions play a role in viral entry into host cell. Interacts with host EIF2AK2/PKR; this interaction inhibits EIF2AK2 and probably allows the virus to evade the innate immune response. Interacts with host CD209/DC-SIGN and CLEC4M/DC-SIGNR. Interact with host SPCS1; this interaction is essential for viral particle assembly. Interacts with protease NS2. The heterodimer E1/E2 interacts with host CLDN1; this interaction plays a role in viral entry into host cell. Part of the viral assembly initiation complex composed of NS2, E1, E2, NS3, NS4A, NS5A and the mature core protein. Interacts with host SLC3A2/4F2hc; the interaction may facilitate viral entry into host cell. Interacts with human PLSCR1. Homohexamer. Homoheptamer. Interacts with protease NS2. In terms of assembly, homodimer. Interacts with host SPCS1; this interaction is essential for viral particle assembly. Interacts with envelope glycoprotein E1. Interacts with envelope glycoprotein E2. Interacts with viroporin p7. Interacts with serine protease/helicase NS3. Part of the replication complex composed of NS2, NS3, NS4A, NS4B, NS5A and the RNA-directed RNA polymerase embedded in an ER-derived membranous web. Part of the viral assembly initiation complex composed of NS2, E1, E2, NS3, NS4A, NS5A and the mature core protein. As to quaternary structure, interacts with protease NS2. Interacts with non-structural protein 4A; this interaction stabilizes the folding of NS3 serine protease. NS3-NS4A interaction is essential for NS3 activation and allows membrane anchorage of the latter. NS3/NS4A complex also prevents phosphorylation of host IRF3, thus preventing the establishment of dsRNA induced antiviral state. Interacts with host MAVS; this interaction leads to the cleavage and inhibition of host MAVS. Interacts with host TICAM1; this interaction leads to the cleavage and inhibition of host TICAM1. Interacts with host TANK-binding kinase/TBK1; this interaction results in the inhibition of the association between TBK1 and IRF3, which leads to the inhibition of IRF3 activation. Interacts with host RBM24. Part of the replication complex composed of NS2, NS3, NS4A, NS4B, NS5A and the RNA-directed RNA polymerase embedded in an ER-derived membranous web. Part of the viral assembly initiation complex composed of NS2, E1, E2, NS3, NS4A, NS5A and the mature core protein. Interacts with NS3 serine protease; this interaction stabilizes the folding of NS3 serine protease. NS3-NS4A interaction is essential for NS3 activation and allows membrane anchorage of the latter. Interacts with non-structural protein 5A (via N-terminus). Part of the replication complex composed of NS2, NS3, NS4A, NS4B, NS5A and the RNA-directed RNA polymerase embedded in an ER-derived membranous web. Part of the viral assembly initiation complex composed of NS2, E1, E2, NS3, NS4A, NS5A and the mature core protein. In terms of assembly, homomultimer. Interacts with non-structural protein NS5A. Interacts with host PLA2G4C; this interaction likely initiates the recruitment of replication complexes to lipid droplets. Interacts with host STING; this interaction disrupts the interaction between STING and TBK1 thereby suppressing the interferon signaling. Part of the replication complex composed of NS2, NS3, NS4A, NS4B, NS5A and the RNA-directed RNA polymerase embedded in an ER-derived membranous web. As to quaternary structure, monomer. Homodimer; dimerization is required for RNA-binding. Interacts with the mature core protein. Interacts (via N-terminus) with non-structural protein 4A. Interacts with non-structural protein 4B. Interacts (via region D2) with RNA-directed RNA polymerase. Part of the viral assembly initiation complex composed of NS2, E1, E2, NS3, NS4A, NS5A and the mature core protein. Part of the replication complex composed of NS2, NS3, NS4A, NS4B, NS5A and the RNA-directed RNA polymerase embedded in an ER-derived membranous web. Interacts with host GRB2. Interacts with host BIN1. Interacts with host PIK3R1. Interacts with host SRCAP. Interacts with host FKBP8. Interacts (via C-terminus) with host VAPB (via MSP domain). Interacts with host EIF2AK2/PKR; this interaction leads to disruption of EIF2AK2 dimerization by NS5A and probably allows the virus to evade the innate immune response. Interacts (via N-terminus) with host PACSIN2 (via N-terminus); this interaction attenuates protein kinase C alpha-mediated phosphorylation of PACSIN2 by disrupting the interaction between PACSIN2 and PRKCA. Interacts (via N-terminus) with host SRC kinase (via SH2 domain). Interacts with most Src-family kinases. Interacts with host IFI27 and SKP2; promotes the ubiquitin-mediated proteasomal degradation of NS5A. Interacts with host GPS2. Interacts with host TNFRSF21; this interaction allows the modulation by the virus of JNK, p38 MAPK, STAT3, and Akt signaling pathways in a DR6-dependent manner. Interacts (via N-terminus) with host CIDEB (via N-terminus); this interaction seems to regulate the association of HCV particles with APOE. Interacts with host CHKA/Choline Kinase-alpha; CHKA bridges host PI4KA and NS5A and potentiates NS5A-stimulated PI4KA activity, which then facilitates the targeting of the ternary complex to the ER for viral replication. Interacts with host SPSB2 (via C-terminus); this interaction targets NS5A for ubiquitination and degradation. Interacts with host RAB18; this interaction may promote the association of NS5A and other replicase components with lipid droplets. Interacts (via region D2) with host PPIA/CYPA; the interaction stimulates RNA-binding ability of NS5A and is dependent on the peptidyl-prolyl cis-trans isomerase activity of PPIA/CYPA. Interacts with host TRIM14; this interaction induces the degradation of NS5A. Homooligomer. Interacts with non-structural protein 5A. Interacts with host VAPB. Interacts with host PRK2/PKN2. Interacts with host HNRNPA1 and SEPT6; these interactions facilitate viral replication. Part of the replication complex composed of NS2, NS3, NS4A, NS4B, NS5A and the RNA-directed RNA polymerase. It depends on Zn(2+) as a cofactor. Mg(2+) serves as cofactor. Post-translationally, specific enzymatic cleavages in vivo yield mature proteins. The structural proteins, core, E1, E2 and p7 are produced by proteolytic processing by host signal peptidases. The core protein precursor is synthesized as a 23 kDa, which is retained in the ER membrane through the hydrophobic signal peptide. Cleavage by the signal peptidase releases the 21 kDa mature core protein. The cleavage of the core protein precursor occurs between aminoacids 176 and 188 but the exact cleavage site is not known. Some degraded forms of the core protein appear as well during the course of infection. The other proteins (p7, NS2, NS3, NS4A, NS4B, NS5A and NS5B) are cleaved by the viral proteases. Autoprocessing between NS2 and NS3 is mediated by the NS2 cysteine protease catalytic domain and regulated by the NS3 N-terminal domain. Phosphorylated by host PKC and PKA. In terms of processing, ubiquitinated; mediated by UBE3A and leading to core protein subsequent proteasomal degradation. Post-translationally, highly N-glycosylated. Palmitoylation is required for NS2/3 autoprocessing and E2 recruitment to membranes. In terms of processing, palmitoylated. This modification may play a role in its polymerization or in protein-protein interactions. Post-translationally, phosphorylated on serines in a basal form termed p56. p58 is a hyperphosphorylated form of p56. p56 and p58 coexist in the cell in roughly equivalent amounts. Hyperphosphorylation is dependent on the presence of NS4A. Host CSNK1A1/CKI-alpha or RPS6KB1 kinases may be responsible for NS5A phosphorylation. Tyrosine phosphorylation is essential for the interaction with host SRC. In terms of processing, the N-terminus is phosphorylated by host PRK2/PKN2.

The protein localises to the host endoplasmic reticulum membrane. Its subcellular location is the host mitochondrion membrane. The protein resides in the virion. It localises to the host cytoplasm. It is found in the host nucleus. The protein localises to the host lipid droplet. Its subcellular location is the virion membrane. The protein resides in the host mitochondrion. It localises to the host cell membrane. It is found in the host perinuclear region. The enzyme catalyses Hydrolysis of four peptide bonds in the viral precursor polyprotein, commonly with Asp or Glu in the P6 position, Cys or Thr in P1 and Ser or Ala in P1'.. It catalyses the reaction a ribonucleoside 5'-triphosphate + H2O = a ribonucleoside 5'-diphosphate + phosphate + H(+). It carries out the reaction ATP + H2O = ADP + phosphate + H(+). The catalysed reaction is RNA(n) + a ribonucleoside 5'-triphosphate = RNA(n+1) + diphosphate. Its activity is regulated as follows. Inhibited by the antiviral drug hexamethylene amiloride. Inhibition by amantadine appears to be genotype-dependent. Also inhibited by long-alkyl-chain iminosugar derivatives. Activity is up-regulated by PRK2/PKN2-mediated phosphorylation. Functionally, packages viral RNA to form a viral nucleocapsid, and promotes virion budding. Participates in the viral particle production as a result of its interaction with the non-structural protein 5A. Binds RNA and may function as a RNA chaperone to induce the RNA structural rearrangements taking place during virus replication. Modulates viral translation initiation by interacting with viral IRES and 40S ribosomal subunit. Affects various cell signaling pathways, host immunity and lipid metabolism. Prevents the establishment of cellular antiviral state by blocking the interferon-alpha/beta (IFN-alpha/beta) and IFN-gamma signaling pathways and by blocking the formation of phosphorylated STAT1 and promoting ubiquitin-mediated proteasome-dependent degradation of STAT1. Activates STAT3 leading to cellular transformation. Regulates the activity of cellular genes, including c-myc and c-fos. May repress the promoter of p53, and sequester CREB3 and SP110 isoform 3/Sp110b in the cytoplasm. Represses cell cycle negative regulating factor CDKN1A, thereby interrupting an important check point of normal cell cycle regulation. Targets transcription factors involved in the regulation of inflammatory responses and in the immune response: suppresses TNF-induced NF-kappa-B activation, and activates AP-1. Binds to dendritic cells (DCs) via C1QR1, resulting in down-regulation of T-lymphocytes proliferation. Alters lipid metabolism by interacting with hepatocellular proteins involved in lipid accumulation and storage. Induces up-regulation of FAS promoter activity, and thereby contributes to the increased triglyceride accumulation in hepatocytes (steatosis). Forms a heterodimer with envelope glycoprotein E2, which mediates virus attachment to the host cell, virion internalization through clathrin-dependent endocytosis and fusion with host membrane. Fusion with the host cell is most likely mediated by both E1 and E2, through conformational rearrangements of the heterodimer required for fusion rather than a classical class II fusion mechanism. E1/E2 heterodimer binds host apolipoproteins such as APOB and ApoE thereby forming a lipo-viro-particle (LVP). APOE associated to the LVP allows the initial virus attachment to cell surface receptors such as the heparan sulfate proteoglycans (HSPGs), syndecan-1 (SDC1), syndecan-1 (SDC2), the low-density lipoprotein receptor (LDLR) and scavenger receptor class B type I (SCARB1). The cholesterol transfer activity of SCARB1 allows E2 exposure and binding of E2 to SCARB1 and the tetraspanin CD81. E1/E2 heterodimer binding on CD81 activates the epithelial growth factor receptor (EGFR) signaling pathway. Diffusion of the complex E1-E2-EGFR-SCARB1-CD81 to the cell lateral membrane allows further interaction with Claudin 1 (CLDN1) and occludin (OCLN) to finally trigger HCV entry. In terms of biological role, forms a heterodimer with envelope glycoprotein E1, which mediates virus attachment to the host cell, virion internalization through clathrin-dependent endocytosis and fusion with host membrane. Fusion with the host cell is most likely mediated by both E1 and E2, through conformational rearrangements of the heterodimer required for fusion rather than a classical class II fusion mechanism. The interaction between envelope glycoprotein E2 and host apolipoprotein E/APOE allows the proper assembly, maturation and infectivity of the viral particles. This interaction is probably promoted via the up-regulation of cellular autophagy by the virus. E1/E2 heterodimer binds host apolipoproteins such as APOB and APOE thereby forming a lipo-viro-particle (LVP). APOE associated to the LVP allows the initial virus attachment to cell surface receptors such as the heparan sulfate proteoglycans (HSPGs), syndecan-1 (SDC1), syndecan-1 (SDC2), the low-density lipoprotein receptor (LDLR) and scavenger receptor class B type I (SCARB1). The cholesterol transfer activity of SCARB1 allows E2 exposure and binding of E2 to SCARB1 and the tetraspanin CD81. E1/E2 heterodimer binding on CD81 activates the epithelial growth factor receptor (EGFR) signaling pathway. Diffusion of the complex E1-E2-EGFR-SCARB1-CD81 to the cell lateral membrane allows further interaction with Claudin 1 (CLDN1) and occludin (OCLN) to finally trigger HCV entry. Inhibits host EIF2AK2/PKR activation, preventing the establishment of an antiviral state. Viral ligand for CD209/DC-SIGN and CLEC4M/DC-SIGNR, which are respectively found on dendritic cells (DCs), and on liver sinusoidal endothelial cells and macrophage-like cells of lymph node sinuses. These interactions allow the capture of circulating HCV particles by these cells and subsequent facilitated transmission to permissive cells such as hepatocytes and lymphocyte subpopulations. The interaction between E2 and host amino acid transporter complex formed by SLC3A2 and SLC7A5/LAT1 may facilitate viral entry into host cell. Its function is as follows. Ion channel protein that acts as a viroporin and plays an essential role in the assembly, envelopment and secretion of viral particles. Regulates the host cell secretory pathway, which induces the intracellular retention of viral glycoproteins and favors assembly of viral particles. Creates a pore in acidic organelles and releases Ca(2+) and H(+) in the cytoplasm of infected cells, leading to a productive viral infection. High levels of cytoplasmic Ca(2+) may trigger membrane trafficking and transport of viral ER-associated proteins to viroplasms, sites of viral genome replication. This ionic imbalance induces the assembly of the inflammasome complex, which triggers the maturation of pro-IL-1beta into IL-1beta through the action of caspase-1. Targets also host mitochondria and induces mitochondrial depolarization. In addition of its role as a viroporin, acts as a lipid raft adhesion factor. Functionally, cysteine protease required for the proteolytic auto-cleavage between the non-structural proteins NS2 and NS3. The N-terminus of NS3 is required for the function of NS2 protease (active region NS2-3). Promotes the initiation of viral particle assembly by mediating the interaction between structural and non-structural proteins. Displays three enzymatic activities: serine protease with a chymotrypsin-like fold, NTPase and RNA helicase. NS3 serine protease, in association with NS4A, is responsible for the cleavages of NS3-NS4A, NS4A-NS4B, NS4B-NS5A and NS5A-NS5B. The NS3/NS4A complex prevents phosphorylation of host IRF3, thus preventing the establishment of dsRNA induced antiviral state. The NS3/NS4A complex induces host amino acid transporter component SLC3A2, thus contributing to HCV propagation. NS3 RNA helicase binds to RNA and unwinds both dsDNA and dsRNA in the 3' to 5' direction, and likely resolves RNA complicated stable secondary structures in the template strand. Binds a single ATP and catalyzes the unzipping of a single base pair of dsRNA. Inhibits host antiviral proteins TBK1 and IRF3 thereby preventing the establishment of an antiviral state. Cleaves host MAVS/CARDIF thereby preventing the establishment of an antiviral state. Cleaves host TICAM1/TRIF, thereby disrupting TLR3 signaling and preventing the establishment of an antiviral state. In terms of biological role, induces a specific membrane alteration that serves as a scaffold for the virus replication complex. This membrane alteration gives rise to the so-called ER-derived membranous web that contains the replication complex. NS4B self-interaction contributes to its function in membranous web formation. Promotes host TRIF protein degradation in a CASP8-dependent manner thereby inhibiting host TLR3-mediated interferon signaling. Disrupts the interaction between STING and TBK1 contributing to the inhibition of interferon signaling. Its function is as follows. Phosphorylated protein that is indispensable for viral replication and assembly. Both hypo- and hyperphosphorylated states are required for the viral life cycle. The hyperphosphorylated form of NS5A is an inhibitor of viral replication. Involved in RNA-binding and especially in binding to the viral genome. Zinc is essential for RNA-binding. Participates in the viral particle production as a result of its interaction with the mature viral core protein. Its interaction with host VAPB may target the viral replication complex to vesicles. Down-regulates viral IRES translation initiation. Mediates interferon resistance, presumably by interacting with and inhibiting host EIF2AK2/PKR. Prevents BIN1-induced apoptosis. Acts as a transcriptional activator of some host genes important for viral replication when localized in the nucleus. Via the interaction with host PACSIN2, modulates lipid droplet formation in order to promote virion assembly. Modulates TNFRSF21/DR6 signaling pathway for viral propagation. Functionally, RNA-dependent RNA polymerase that performs primer-template recognition and RNA synthesis during viral replication. Initiates RNA transcription/replication at a flavin adenine dinucleotide (FAD), resulting in a 5'- FAD cap on viral RNAs. In this way, recognition of viral 5' RNA by host pattern recognition receptors can be bypassed, thereby evading activation of antiviral pathways. This chain is Genome polyprotein, found in Hepatitis C virus genotype 1b (isolate HC-J1) (HCV).